The chain runs to 553 residues: Zinc finger protein with KRAB and SCAN domains 3 (553 aa).

Positions 28–49 (EQEESSPLAEETSWLGSPGPDR) are disordered. Phosphoserine occurs at positions 33 and 44. The 83-residue stretch at 51–133 (RQRFRAFRYP…ALLEYLDRQL (83 aa)) folds into the SCAN box domain. The residue at position 136 (T136) is a Phosphothreonine. K176 participates in a covalent cross-link: Glycyl lysine isopeptide (Lys-Gly) (interchain with G-Cter in SUMO2). A Phosphothreonine modification is found at T206. The region spanning 213–273 (LKMEDVAPVL…RAEEYRDQKP (61 aa)) is the KRAB domain. S223 is subject to Phosphoserine. C2H2-type zinc fingers lie at residues 313 to 335 (FYCR…KRIH), 341 to 363 (YECE…QRVH), 369 to 391 (YECE…QRTH), 397 to 419 (YECD…HRIH), and 425 to 447 (YQCN…QRTH). T448 bears the Phosphothreonine mark. 2 C2H2-type zinc fingers span residues 479 to 501 (YQCN…QKVH) and 507 to 529 (FECQ…QRRH).

The protein belongs to the krueppel C2H2-type zinc-finger protein family. As to expression, expressed in heart, brain, spleen, lung, liver, skeletal muscle, kidney and testis.

The protein resides in the nucleus. It localises to the cytoplasm. Functionally, transcriptional factor that binds to the consensus sequence 5'-[GT][AG][AGT]GGGG-3' and acts as a repressor of autophagy. Specifically represses expression of genes involved in autophagy and lysosome biogenesis/function such as MAP1LC3B, ULK1 or WIPI2. Associates with chromatin at the ITGB4 and VEGF promoters. The chain is Zinc finger protein with KRAB and SCAN domains 3 (Zkscan3) from Mus musculus (Mouse).